Here is a 37-residue protein sequence, read N- to C-terminus: Ice-structuring protein 3 (37 aa).

This sequence belongs to the type-I AFP family.

Its function is as follows. Contributes to protect fish blood from freezing at subzero sea water temperatures. Lowers the blood freezing point. Binds to nascent ice crystals and prevents further growth. The protein is Ice-structuring protein 3 of Pseudopleuronectes americanus (Winter flounder).